Consider the following 613-residue polypeptide: Ethylene response sensor 1 (613 aa).

3 helical membrane-spanning segments follow: residues 23–43 (ISDA…IYFV), 58–78 (FGAF…MFFM), and 95–115 (AVVS…LLSV). Cys-65 and His-69 together coordinate Cu cation. The GAF domain maps to 158–307 (DRHTILRTTL…NVADQVAVAL (150 aa)). The region spanning 350 to 589 (VMNHEMRTPM…SFIIRLGICN (240 aa)) is the Histidine kinase domain. Phosphohistidine; by autocatalysis is present on His-353.

It belongs to the ethylene receptor family. In terms of assembly, homodimer; disulfide-linked. Heteromer with ETR1. Cu cation serves as cofactor. Post-translationally, autophosphorylated on both His and Ser residues in the presence of manganese. Loss of His autophosphorylation in the presence of both manganese and magnesium. In terms of tissue distribution, expressed in etiolated seedlings, leaves, stems, roots, flowers, embryos, anthers, carpels and ovules.

The protein resides in the endoplasmic reticulum membrane. The enzyme catalyses ATP + protein L-histidine = ADP + protein N-phospho-L-histidine.. Ethylene receptor related to bacterial two-component regulators. Acts as a redundant negative regulator of ethylene signaling. This Arabidopsis thaliana (Mouse-ear cress) protein is Ethylene response sensor 1 (ERS1).